The following is an 881-amino-acid chain: Heat shock protein 70 homolog LHS1 (881 aa).

The first 20 residues, 1–20 (MRNVLRLLFLTAFVAIGSLA), serve as a signal peptide directing secretion. N-linked (GlcNAc...) asparagine glycosylation is found at Asn128, Asn458, Asn474, Asn481, Asn489, Asn527, and Asn844. The span at 833 to 844 (RKLEQEKSRNNN) shows a compositional bias: basic and acidic residues. The segment at 833 to 881 (RKLEQEKSRNNNETESTVINSADDKTTIVNDKTTESNPSSEEDILHDEL) is disordered. Polar residues predominate over residues 859-871 (TIVNDKTTESNPS). Positions 872–881 (SEEDILHDEL) are enriched in acidic residues. The short motif at 878–881 (HDEL) is the Prevents secretion from ER element.

Belongs to the heat shock protein 70 family. Interacts with the heat shock protein 70 (HSP70) KAR2, and this stimulates nucleotide exchange on KAR2. KAR2 in turn acts to stimulate the ATPase activity of LHS1. N-glycosylated.

It is found in the endoplasmic reticulum lumen. The enzyme catalyses ATP + H2O = ADP + phosphate + H(+). Its function is as follows. Chaperone required for protein translocation and folding in the endoplasmic reticulum. The polypeptide is Heat shock protein 70 homolog LHS1 (LHS1) (Saccharomyces cerevisiae (strain ATCC 204508 / S288c) (Baker's yeast)).